Consider the following 206-residue polypeptide: Small ribosomal subunit protein uS4 (206 aa).

Residues 98 to 164 (MRLDNVVYRL…EKFKTFIENP (67 aa)) enclose the S4 RNA-binding domain.

It belongs to the universal ribosomal protein uS4 family. In terms of assembly, part of the 30S ribosomal subunit. Contacts protein S5. The interaction surface between S4 and S5 is involved in control of translational fidelity.

Functionally, one of the primary rRNA binding proteins, it binds directly to 16S rRNA where it nucleates assembly of the body of the 30S subunit. Its function is as follows. With S5 and S12 plays an important role in translational accuracy. This is Small ribosomal subunit protein uS4 from Clostridium tetani (strain Massachusetts / E88).